The sequence spans 235 residues: MSNVQRKRIDIRRPTLAELSSIRSIAMNALNGQSRNLSQKIFWHPLYLAVFGLVFMGIYRLTNMVEGNTKLRTFVLLILVSAVFLTLIEFPCRNVYAKISTEDNQPDGCLAEENLKHFYMARIDKERVIGIIGILPANAPGAYQNTPTIVHWTVIPKFYQYAFDLLDSALREAKEMGADVVSARVYSTDPMLKAFERKDFTPVVDEAFDYLSFFGLRRLVLQKNLSEQPGFENRR.

3 helical membrane-spanning segments follow: residues 41–61 (IFWH…IYRL), 71–91 (LRTF…IEFP), and 129–149 (IGII…TPTI).

Its subcellular location is the membrane. This is an uncharacterized protein from Schizosaccharomyces pombe (strain 972 / ATCC 24843) (Fission yeast).